A 571-amino-acid chain; its full sequence is Glutamate--tRNA ligase (571 aa).

The 'HIGH' region signature appears at 110–120 (PNPNGPATLGS).

It belongs to the class-I aminoacyl-tRNA synthetase family. Glutamate--tRNA ligase type 2 subfamily.

The protein resides in the cytoplasm. It carries out the reaction tRNA(Glu) + L-glutamate + ATP = L-glutamyl-tRNA(Glu) + AMP + diphosphate. Catalyzes the attachment of glutamate to tRNA(Glu) in a two-step reaction: glutamate is first activated by ATP to form Glu-AMP and then transferred to the acceptor end of tRNA(Glu). This Methanosarcina mazei (strain ATCC BAA-159 / DSM 3647 / Goe1 / Go1 / JCM 11833 / OCM 88) (Methanosarcina frisia) protein is Glutamate--tRNA ligase.